A 349-amino-acid chain; its full sequence is Aspartate carbamoyltransferase catalytic subunit (349 aa).

Carbamoyl phosphate contacts are provided by arginine 59 and threonine 60. Lysine 87 contacts L-aspartate. Carbamoyl phosphate is bound by residues arginine 109, histidine 142, and glutamine 145. L-aspartate-binding residues include arginine 182 and arginine 253. Carbamoyl phosphate contacts are provided by glycine 294 and proline 295.

It belongs to the aspartate/ornithine carbamoyltransferase superfamily. ATCase family. In terms of assembly, heterododecamer (2C3:3R2) of six catalytic PyrB chains organized as two trimers (C3), and six regulatory PyrI chains organized as three dimers (R2).

It carries out the reaction carbamoyl phosphate + L-aspartate = N-carbamoyl-L-aspartate + phosphate + H(+). The protein operates within pyrimidine metabolism; UMP biosynthesis via de novo pathway; (S)-dihydroorotate from bicarbonate: step 2/3. Catalyzes the condensation of carbamoyl phosphate and aspartate to form carbamoyl aspartate and inorganic phosphate, the committed step in the de novo pyrimidine nucleotide biosynthesis pathway. The sequence is that of Aspartate carbamoyltransferase catalytic subunit from Synechococcus sp. (strain CC9311).